Reading from the N-terminus, the 99-residue chain is Large ribosomal subunit protein eL42 (99 aa).

The protein belongs to the eukaryotic ribosomal protein eL42 family.

In Chlamydomonas reinhardtii (Chlamydomonas smithii), this protein is Large ribosomal subunit protein eL42 (RPL44).